The chain runs to 1530 residues: Regulating synaptic membrane exocytosis protein 2 (1530 aa).

The interval 1 to 34 is disordered; that stretch reads MSAPLGPRGRPAPTPAASQPPPQPEMPDLSHLTE. A compositionally biased stretch (pro residues) spans 10-25; the sequence is RPAPTPAASQPPPQPE. Positions 26–194 constitute a RabBD domain; the sequence is MPDLSHLTEE…TKSGAWFYNS (169 aa). The FYVE-type zinc finger occupies 126-182; the sequence is KGDAPTCGICHKTKFADGCGHNCSYCQTKFCARCGGRVSLRSNKVMWVCNLCRKQQE. Residues C132, C135, C148, C151, C156, C159, C174, and C177 each coordinate Zn(2+). Disordered regions lie at residues 195–608 and 632–655; these read GSNT…ERQK and SGVD…HPVT. Composition is skewed to basic and acidic residues over residues 210–225, 327–338, 357–375, 391–410, and 419–443; these read LRNE…KLHE, EPGHLNYRDSNR, RDEY…RYRS, EQMR…RHSD, and EDSR…RRAA. Phosphoserine is present on S409. Residues 458 to 472 show a composition bias toward polar residues; it reads AQGQSSYPQRTSNHS. Residues 484 to 501 show a composition bias toward basic and acidic residues; that stretch reads DRPDMRRADSLRKQHHLD. Positions 519-530 are enriched in polar residues; the sequence is RNDSLSSDQSES. The segment covering 537 to 546 has biased composition (basic residues); it reads RPHKSKKGGK. The segment covering 567 to 577 has biased composition (acidic residues); it reads SCDDVELESES. Composition is skewed to basic and acidic residues over residues 578–592 and 643–653; these read VSEK…RKTS and NEEHSHSDKHP. The PDZ domain maps to 677-763; it reads DGSVPRDSGA…EPQVELVVSR (87 aa). Phosphothreonine is present on T698. The disordered stretch occupies residues 771–802; that stretch reads IPDSTHAQLESSSSSFESQKMDRPSISVTSPM. S800 and S803 each carry phosphoserine. Residues 814-937 form the C2 1 domain; it reads LSGQLSIKLW…ALLDDEPHWY (124 aa). 6 disordered regions span residues 948-982, 1003-1122, 1130-1149, 1154-1187, 1242-1263, and 1282-1307; these read PLPR…SEVS, LQSS…ERSA, RQMK…RLEQ, KYRS…SRTS, SLEK…TSGK, and KSRS…QRST. Residues 1003 to 1024 are compositionally biased toward polar residues; that stretch reads LQSSTLSVPEQVMSSNHCSPSG. The span at 1067–1086 shows a compositional bias: basic and acidic residues; the sequence is RMDRHRVMDDHYSSDRDRSH. Polar residues predominate over residues 1088–1101; the sequence is RTGSVQTSPSSTPG. S1095 carries the phosphoserine modification. Residues 1154–1165 are compositionally biased toward basic and acidic residues; the sequence is KYRSGWDPHRGA. A Phosphoserine modification is found at S1175. Positions 1178-1187 are enriched in low complexity; that stretch reads SDVSAVSRTS. The residue at position 1251 (S1251) is a Phosphoserine. One can recognise a C2 2 domain in the interval 1376–1494; the sequence is AMGDIQVGMM…ELSNMVIGWF (119 aa). Phosphoserine is present on residues S1515 and S1518.

As to quaternary structure, interacts with TSPOAP1 and RIMBP2. Interacts with PPFIA3 and PPFIA4. Interacts via its zinc finger with the first C2 domain of UNC13A. Forms a complex consisting of UNC13A, RIMS2 and RAB3A. Heterodimer with PCLO. Part of a ternary complex involving PCLO and EPAC2. Interacts with RAB3A and RAB3B that have been activated by GTP-binding. Interacts with RAB3C, RAB3D and RAB26. In terms of tissue distribution, detected in testis, pituitary and an insulinoma cell line. Detected at low levels in cerebellar cortex.

It localises to the synapse. The protein localises to the synaptosome. Its function is as follows. Rab effector involved in exocytosis. May act as scaffold protein. Plays a role in dendrite formation by melanocytes. In Mus musculus (Mouse), this protein is Regulating synaptic membrane exocytosis protein 2 (Rims2).